The chain runs to 261 residues: General secretion pathway protein N (261 aa).

The Cytoplasmic portion of the chain corresponds to 1–10 (MRLEMIGLRT). Residues 11-31 (WLLATVVGWALLVCVLAVAGL) traverse the membrane as a helical segment. At 32–261 (GKRVELLPDD…QGGSTPGQTQ (230 aa)) the chain is on the periplasmic side. A disordered region spans residues 158 to 261 (VFNGQGGQPP…QGGSTPGQTQ (104 aa)). Residues 179-200 (AVPPLPPNVPPAPATPAPPPAE) are compositionally biased toward pro residues. Residues 201–211 (VPQQQPGGQAP) are compositionally biased toward low complexity. Residues 227 to 244 (RPSDEQMRAIRERIEARR) show a composition bias toward basic and acidic residues.

As to quaternary structure, binds to XpsD.

The protein localises to the cell inner membrane. Involved in a general secretion pathway (GSP) for the export of proteins. The protein is General secretion pathway protein N (xpsN) of Xanthomonas campestris pv. campestris (strain ATCC 33913 / DSM 3586 / NCPPB 528 / LMG 568 / P 25).